Here is a 101-residue protein sequence, read N- to C-terminus: NAD(P)H-quinone oxidoreductase subunit 4L, chloroplastic (101 aa).

3 consecutive transmembrane segments (helical) span residues 2–22, 32–52, and 61–81; these read MLEHVLVLSAYLFSIGIYGLI, MCLELILNAVNINFVTFSDFF, and IFSIFVIAIAAAEAAIGPAIV.

It belongs to the complex I subunit 4L family. NDH is composed of at least 16 different subunits, 5 of which are encoded in the nucleus.

It localises to the plastid. The protein localises to the chloroplast thylakoid membrane. The enzyme catalyses a plastoquinone + NADH + (n+1) H(+)(in) = a plastoquinol + NAD(+) + n H(+)(out). It catalyses the reaction a plastoquinone + NADPH + (n+1) H(+)(in) = a plastoquinol + NADP(+) + n H(+)(out). Its function is as follows. NDH shuttles electrons from NAD(P)H:plastoquinone, via FMN and iron-sulfur (Fe-S) centers, to quinones in the photosynthetic chain and possibly in a chloroplast respiratory chain. The immediate electron acceptor for the enzyme in this species is believed to be plastoquinone. Couples the redox reaction to proton translocation, and thus conserves the redox energy in a proton gradient. The polypeptide is NAD(P)H-quinone oxidoreductase subunit 4L, chloroplastic (Vitis vinifera (Grape)).